The primary structure comprises 213 residues: Phosphatidylserine decarboxylase proenzyme (213 aa).

Residue Ser180 is the Schiff-base intermediate with substrate; via pyruvic acid of the active site. Residue Ser180 is modified to Pyruvic acid (Ser); by autocatalysis.

The protein belongs to the phosphatidylserine decarboxylase family. PSD-A subfamily. Heterodimer of a large membrane-associated beta subunit and a small pyruvoyl-containing alpha subunit. Pyruvate serves as cofactor. In terms of processing, is synthesized initially as an inactive proenzyme. Formation of the active enzyme involves a self-maturation process in which the active site pyruvoyl group is generated from an internal serine residue via an autocatalytic post-translational modification. Two non-identical subunits are generated from the proenzyme in this reaction, and the pyruvate is formed at the N-terminus of the alpha chain, which is derived from the carboxyl end of the proenzyme. The post-translation cleavage follows an unusual pathway, termed non-hydrolytic serinolysis, in which the side chain hydroxyl group of the serine supplies its oxygen atom to form the C-terminus of the beta chain, while the remainder of the serine residue undergoes an oxidative deamination to produce ammonia and the pyruvoyl prosthetic group on the alpha chain.

The protein localises to the cell membrane. The enzyme catalyses a 1,2-diacyl-sn-glycero-3-phospho-L-serine + H(+) = a 1,2-diacyl-sn-glycero-3-phosphoethanolamine + CO2. It participates in phospholipid metabolism; phosphatidylethanolamine biosynthesis; phosphatidylethanolamine from CDP-diacylglycerol: step 2/2. Functionally, catalyzes the formation of phosphatidylethanolamine (PtdEtn) from phosphatidylserine (PtdSer). This Carboxydothermus hydrogenoformans (strain ATCC BAA-161 / DSM 6008 / Z-2901) protein is Phosphatidylserine decarboxylase proenzyme.